A 318-amino-acid polypeptide reads, in one-letter code: NADH-ubiquinone oxidoreductase chain 1 (318 aa).

The next 8 membrane-spanning stretches (helical) occupy residues 2-22, 70-90, 100-120, 147-167, 171-191, 223-243, 253-273, and 294-314; these read FFIN…FLTL, MFIL…IPLP, LGVL…LWSG, AIIL…TLII, HMWL…STLA, FFLA…ILFF, ELYS…FLWI, and LPLT…TASI.

It belongs to the complex I subunit 1 family. Core subunit of respiratory chain NADH dehydrogenase (Complex I) which is composed of 45 different subunits.

It is found in the mitochondrion inner membrane. It carries out the reaction a ubiquinone + NADH + 5 H(+)(in) = a ubiquinol + NAD(+) + 4 H(+)(out). In terms of biological role, core subunit of the mitochondrial membrane respiratory chain NADH dehydrogenase (Complex I) which catalyzes electron transfer from NADH through the respiratory chain, using ubiquinone as an electron acceptor. Essential for the catalytic activity and assembly of complex I. The chain is NADH-ubiquinone oxidoreductase chain 1 (MT-ND1) from Canis lupus familiaris (Dog).